Consider the following 258-residue polypeptide: Regulatory protein RecX (258 aa).

This sequence belongs to the RecX family.

The protein resides in the cytoplasm. Its function is as follows. Modulates RecA activity. The polypeptide is Regulatory protein RecX (Streptococcus equi subsp. zooepidemicus (strain MGCS10565)).